The chain runs to 374 residues: P2Y purinoceptor 11 (374 aa).

Residues 1–29 (MAANVSGAKSCPANFLAAADDKLSGFQGD) are Extracellular-facing. Residue Asn-4 is glycosylated (N-linked (GlcNAc...) asparagine). A helical transmembrane segment spans residues 30 to 50 (FLWPILVVEFLVAVASNGLAL). At 51–64 (YRFSIRKQRPWHPA) the chain is on the cytoplasmic side. A helical membrane pass occupies residues 65-85 (VVFSVQLAVSDLLCALTLPPL). At 86 to 116 (AAYLYPPKHWRYGEAACRLERFLFTCNLLGS) the chain is on the extracellular side. A disulfide bond links Cys-102 and Cys-180. Residues 117 to 137 (VIFITCISLNRYLGIVHPFFA) form a helical membrane-spanning segment. Residues 138-146 (RSHLRPKHA) lie on the Cytoplasmic side of the membrane. A helical membrane pass occupies residues 147 to 167 (WAVSAAGWVLAALLAMPTLSF). Residues 168–206 (SHLKRPQQGAGNCSVARPEACIKCLGTADHGLAAYRAYS) are Extracellular-facing. Asn-179 carries an N-linked (GlcNAc...) asparagine glycan. The chain crosses the membrane as a helical span at residues 207 to 227 (LVLAGLGCGLPLLLTLAAYGA). The Cytoplasmic segment spans residues 228-245 (LGRAVLRSPGMTVAEKLR). Residues 246–266 (VAALVASGVALYASSYVPYHI) traverse the membrane as a helical segment. Topologically, residues 267–308 (MRVLNVDARRRWSTRCPSFADIAQATAALELGPYVGYQVMRG) are extracellular. Residues 309–329 (LMPLAFCVHPLLYMAAVPSLG) form a helical membrane-spanning segment. At 330–374 (CCCRHCPGYRDSWNPEDAKSTGQALPLNATAAPKPSEPQSRELSQ) the chain is on the cytoplasmic side. The disordered stretch occupies residues 345 to 374 (EDAKSTGQALPLNATAAPKPSEPQSRELSQ).

This sequence belongs to the G-protein coupled receptor 1 family. In terms of tissue distribution, highest expression in liver and spleen.

The protein resides in the cell membrane. Functionally, receptor for ATP and ADP coupled to G-proteins that activate both phosphatidylinositol-calcium and adenylyl cyclase second messenger systems. Not activated by UTP or UDP. In Homo sapiens (Human), this protein is P2Y purinoceptor 11 (P2RY11).